The chain runs to 438 residues: Adenylosuccinate synthetase (438 aa).

GTP-binding positions include 13–19 (GDEGKGK) and 41–43 (GHT). The Proton acceptor role is filled by Asp-14. Mg(2+) contacts are provided by Asp-14 and Gly-41. IMP is bound by residues 14-17 (DEGK), 39-42 (NAGH), Thr-130, Arg-144, Gln-225, Thr-240, and Arg-310. The Proton donor role is filled by His-42. Position 306-312 (306-312 (ATTGRLR)) interacts with substrate. GTP contacts are provided by residues Arg-312, 338 to 340 (KLD), and 421 to 423 (STG).

The protein belongs to the adenylosuccinate synthetase family. In terms of assembly, homodimer. The cofactor is Mg(2+).

The protein localises to the cytoplasm. The catalysed reaction is IMP + L-aspartate + GTP = N(6)-(1,2-dicarboxyethyl)-AMP + GDP + phosphate + 2 H(+). The protein operates within purine metabolism; AMP biosynthesis via de novo pathway; AMP from IMP: step 1/2. Plays an important role in the de novo pathway of purine nucleotide biosynthesis. Catalyzes the first committed step in the biosynthesis of AMP from IMP. This chain is Adenylosuccinate synthetase, found in Vibrio parahaemolyticus serotype O3:K6 (strain RIMD 2210633).